We begin with the raw amino-acid sequence, 341 residues long: Processive diacylglycerol beta-glycosyltransferase (341 aa).

This sequence belongs to the glycosyltransferase 2 family. Mg(2+) is required as a cofactor.

It localises to the cell membrane. It carries out the reaction a 1,2-diacyl-sn-glycerol + UDP-alpha-D-glucose = a 1,2-diacyl-3-O-(beta-D-glucopyranosyl)-sn-glycerol + UDP + H(+). The enzyme catalyses a 1,2-diacyl-sn-glycerol + UDP-alpha-D-galactose = a 1,2-diacyl-3-O-(beta-D-galactosyl)-sn-glycerol + UDP + H(+). The catalysed reaction is a 1,2-diacyl-3-O-(beta-D-glucopyranosyl)-sn-glycerol + UDP-alpha-D-glucose = a 1,2-diacyl-3-O-(beta-D-Glc-(1-&gt;6)-beta-D-Glc)-sn-glycerol + UDP + H(+). It catalyses the reaction a 1,2-diacyl-3-O-(beta-D-galactosyl)-sn-glycerol + UDP-alpha-D-galactose = a 1,2-diacyl-3-O-[beta-D-galactosyl-(1-&gt;6)-beta-D-galactosyl]-sn-glycerol + UDP + H(+). The protein operates within glycolipid metabolism; diglucosyl-diacylglycerol biosynthesis. Its activity is regulated as follows. Activated by the negatively charged lipid dioleoylphosphatidylglycerol (DOPG) and inhibited by N-(n-nonyl)deoxygalactonojirimycin (C9J). Functionally, processive glycosyltransferase involved in the biosynthesis of both the non-bilayer-prone beta-monoglycosyldiacylglycerol and the bilayer-forming membrane lipid beta-diglycosyldiacylglycerol. These components contribute to regulate the properties and stability of the membrane. Catalyzes sequentially the transfers of glucosyl or galactosyl residues from UDP-Glc or UDP-Gal to diacylglycerol (DAG) acceptor to form the corresponding beta-glycosyl-DAG (3-O-(beta-D-glycopyranosyl)-1,2-diacyl-sn-glycerol), which then acts as acceptor to give beta-diglycosyl-DAG product (3-O-(beta-D-glycopyranosyl-beta-(1-&gt;6)-D-glycopyranosyl)-1,2-diacyl-sn-glycerol). Dioleoylglycerol (DOG) is a preferred sugar acceptor than 3-O-(beta-D-glucopyranosyl)-1,2-dioleoyl-sn-glycerol. The sequence is that of Processive diacylglycerol beta-glycosyltransferase from Mycoplasma genitalium (strain ATCC 33530 / DSM 19775 / NCTC 10195 / G37) (Mycoplasmoides genitalium).